The primary structure comprises 114 residues: T cell receptor beta variable 5-5 (114 aa).

The first 21 residues, 1–21 (MGPGLLCWVLLCLLGAGPVDA), serve as a signal peptide directing secretion. The Ig-like domain maps to 22–114 (GVTQSPTHLI…SALYLCASSL (93 aa)). C42 and C110 are oxidised to a cystine. An N-linked (GlcNAc...) asparagine glycan is attached at N90.

As to quaternary structure, alpha-beta TR is a heterodimer composed of an alpha and beta chain; disulfide-linked. The alpha-beta TR is associated with the transmembrane signaling CD3 coreceptor proteins to form the TR-CD3 (TcR or TCR). The assembly of alpha-beta TR heterodimers with CD3 occurs in the endoplasmic reticulum where a single alpha-beta TR heterodimer associates with one CD3D-CD3E heterodimer, one CD3G-CD3E heterodimer and one CD247 homodimer forming a stable octameric structure. CD3D-CD3E and CD3G-CD3E heterodimers preferentially associate with TR alpha and TR beta chains, respectively. The association of the CD247 homodimer is the last step of TcR assembly in the endoplasmic reticulum and is required for transport to the cell surface.

Its subcellular location is the cell membrane. V region of the variable domain of T cell receptor (TR) beta chain that participates in the antigen recognition. Alpha-beta T cell receptors are antigen specific receptors which are essential to the immune response and are present on the cell surface of T lymphocytes. Recognize peptide-major histocompatibility (MH) (pMH) complexes that are displayed by antigen presenting cells (APC), a prerequisite for efficient T cell adaptive immunity against pathogens. Binding of alpha-beta TR to pMH complex initiates TR-CD3 clustering on the cell surface and intracellular activation of LCK that phosphorylates the ITAM motifs of CD3G, CD3D, CD3E and CD247 enabling the recruitment of ZAP70. In turn ZAP70 phosphorylates LAT, which recruits numerous signaling molecules to form the LAT signalosome. The LAT signalosome propagates signal branching to three major signaling pathways, the calcium, the mitogen-activated protein kinase (MAPK) kinase and the nuclear factor NF-kappa-B (NF-kB) pathways, leading to the mobilization of transcription factors that are critical for gene expression and essential for T cell growth and differentiation. The T cell repertoire is generated in the thymus, by V-(D)-J rearrangement. This repertoire is then shaped by intrathymic selection events to generate a peripheral T cell pool of self-MH restricted, non-autoaggressive T cells. Post-thymic interaction of alpha-beta TR with the pMH complexes shapes TR structural and functional avidity. In Homo sapiens (Human), this protein is T cell receptor beta variable 5-5.